Here is a 217-residue protein sequence, read N- to C-terminus: Ras-related protein Rab-19 (217 aa).

9 residues coordinate GTP: Ser-26, Val-28, Gly-29, Lys-30, Thr-31, Cys-32, Tyr-42, Glu-44, and Thr-49. Position 31 (Thr-31) interacts with Mg(2+). The Switch 1 motif lies at 39–54 (SGVYMEAQQNTIGVDF). Mg(2+) contacts are provided by Thr-49 and Asp-72. A Switch 2 motif is present at residues 74–89 (AGQERFRTITQSYYRS). 7 residues coordinate GTP: Gly-75, Asn-130, Lys-131, Asp-133, Ser-161, Ala-162, and Lys-163. S-geranylgeranyl cysteine attachment occurs at residues Cys-215 and Cys-217. Cys-217 carries the cysteine methyl ester modification.

It belongs to the small GTPase superfamily. Rab family. Mg(2+) serves as cofactor.

It localises to the cell membrane. The catalysed reaction is GTP + H2O = GDP + phosphate + H(+). Its activity is regulated as follows. Regulated by guanine nucleotide exchange factors (GEFs) which promote the exchange of bound GDP for free GTP. Regulated by GTPase activating proteins (GAPs) which increase the GTP hydrolysis activity. Inhibited by GDP dissociation inhibitors (GDIs). In terms of biological role, the small GTPases Rab are key regulators of intracellular membrane trafficking, from the formation of transport vesicles to their fusion with membranes. Rabs cycle between an inactive GDP-bound form and an active GTP-bound form that is able to recruit to membranes different set of downstream effectors directly responsible for vesicle formation, movement, tethering and fusion. The protein is Ras-related protein Rab-19 (RAB19) of Bos taurus (Bovine).